Consider the following 652-residue polypeptide: Acetyl-coenzyme A synthetase (652 aa).

CoA-binding positions include 189-192 (RGGK) and Thr-311. ATP is bound by residues 387–389 (GEP), 411–416 (DTWWQT), Asp-500, and Arg-515. Residue Ser-523 coordinates CoA. Arg-526 is an ATP binding site. The Mg(2+) site is built by Val-537, His-539, and Val-542. Arg-584 contributes to the CoA binding site. Lys-609 carries the post-translational modification N6-acetyllysine.

The protein belongs to the ATP-dependent AMP-binding enzyme family. It depends on Mg(2+) as a cofactor. Post-translationally, acetylated. Deacetylation by the SIR2-homolog deacetylase activates the enzyme.

It carries out the reaction acetate + ATP + CoA = acetyl-CoA + AMP + diphosphate. Functionally, catalyzes the conversion of acetate into acetyl-CoA (AcCoA), an essential intermediate at the junction of anabolic and catabolic pathways. AcsA undergoes a two-step reaction. In the first half reaction, AcsA combines acetate with ATP to form acetyl-adenylate (AcAMP) intermediate. In the second half reaction, it can then transfer the acetyl group from AcAMP to the sulfhydryl group of CoA, forming the product AcCoA. In Bartonella henselae (strain ATCC 49882 / DSM 28221 / CCUG 30454 / Houston 1) (Rochalimaea henselae), this protein is Acetyl-coenzyme A synthetase.